The sequence spans 976 residues: Receptor-like protein 14 (976 aa).

A signal peptide spans 1-26; it reads MERKVFSGQNLIWVMLLLVQLRGYKC. The Extracellular segment spans residues 27–928; sequence CIEKERKALL…DDDDEAAIDM (902 aa). 7 N-linked (GlcNAc...) asparagine glycosylation sites follow: Asn60, Asn75, Asn98, Asn112, Asn151, Asn185, and Asn200. LRR repeat units follow at residues 105–127, 137–160, 162–185, 186–209, 210–233, 234–258, 260–283, 284–306, 308–331, 333–358, 359–381, 382–405, 407–428, 429–452, 454–477, 478–501, and 503–528; these read FEEL…LFDD, LRNL…FLNA, TSLT…ELKN, LTKL…FTHL, EKLK…ELKV, LTNL…VFCE, KNLR…LGNL, NKLR…SFNS, ESLE…PLAN, TKLK…WLPK, FQLT…LVYQ, TNLR…LLEN, PELK…PTIV, HKLQ…IGHV, PRLL…MGEM, NDIS…LLTG, and FSLI…RLTS. Asn331 carries an N-linked (GlcNAc...) asparagine glycan. Asn416 carries N-linked (GlcNAc...) asparagine glycosylation. Residues Asn460 and Asn489 are each glycosylated (N-linked (GlcNAc...) asparagine). An LRR 18; degenerate repeat occupies 530–549; that stretch reads IVLRMHNNLFTGEIGVGLRT. LRR repeat units follow at residues 550–573, 575–599, 600–623, 625–645, 646–669, 671–692, 693–715, 782–805, 806–829, 831–854, and 856–879; these read LVNL…SIPP, SSHL…LLAI, HHLN…VVNS, YGIK…VTLL, ENAY…VNTG, MITL…LCDL, TSIR…CLNH, LDYM…ELGD, LSKL…NFSK, KDIE…LTNL, and SLAV…QFNT. A glycan (N-linked (GlcNAc...) asparagine) is linked at Asn552. A glycan (N-linked (GlcNAc...) asparagine) is linked at Asn633. An N-linked (GlcNAc...) asparagine glycan is attached at Asn680. 5 N-linked (GlcNAc...) asparagine glycosylation sites follow: Asn813, Asn826, Asn853, Asn861, and Asn866. Residues 897-922 form a disordered region; the sequence is DRSCEGKKNTKEADNGGEEEEEDDDD. Basic and acidic residues predominate over residues 898–910; the sequence is RSCEGKKNTKEAD. A compositionally biased stretch (acidic residues) spans 911-922; it reads NGGEEEEEDDDD. Residues 929 to 949 traverse the membrane as a helical segment; sequence VVLYWTTGSTYAIALIGILVL. The Cytoplasmic segment spans residues 950 to 976; it reads MCFDCPWRRTWLCIVDAFIASGKSMFS.

It belongs to the RLP family.

It localises to the cell membrane. In Arabidopsis thaliana (Mouse-ear cress), this protein is Receptor-like protein 14.